The following is a 460-amino-acid chain: Oxysterols receptor LXR-beta (460 aa).

Residues Met1–Pro14 are compositionally biased toward low complexity. Positions Met1–Ala78 are disordered. The transactivation AF-1; required for ligand-independent transactivation function stretch occupies residues Met1–Glu85. The segment covering Glu36 to Asp45 has biased composition (pro residues). Positions His84–Ser161 form a DNA-binding region, nuclear receptor. NR C4-type zinc fingers lie at residues Cys87 to Cys107 and Cys125 to Cys149. A disordered region spans residues Lys169–Gly216. The span at Gln175–Gly198 shows a compositional bias: low complexity. A compositionally biased stretch (gly residues) spans Ala199–Glu215. A transactivation AF-2; required for ligand-dependent transactivation function; mediates interaction with CCAR2 region spans residues Leu219–Glu460. Residues Ala222–Glu460 form the NR LBD domain. Residues Lys409 and Lys447 each participate in a glycyl lysine isopeptide (Lys-Gly) (interchain with G-Cter in SUMO2) cross-link.

It belongs to the nuclear hormone receptor family. NR1 subfamily. In terms of assembly, forms a heterodimer with RXR. Interacts with CCAR2 (via N-terminus) in a ligand-independent manner. Interacts (when sumoylated) with GPS2; interaction with GPS2 onto hepatic acute phase protein promoters prevents N-Cor corepressor complex dissociation. Interacts with ABCA12 and ABCA1; this interaction is required for ABCA1 localization to the cell surface and is necessary for its normal activity and stability. In terms of processing, sumoylated by SUMO2 at Lys-409 and Lys-447 during the hepatic acute phase response, leading to promote interaction with GPS2 and prevent N-Cor corepressor complex dissociation. As to expression, ubiquitous.

The protein resides in the nucleus. Its function is as follows. Nuclear receptor that exhibits a ligand-dependent transcriptional activation activity. Binds preferentially to double-stranded oligonucleotide direct repeats having the consensus half-site sequence 5'-AGGTCA-3' and 4-nt spacing (DR-4). Regulates cholesterol uptake through MYLIP-dependent ubiquitination of LDLR, VLDLR and LRP8; DLDLR and LRP8. Interplays functionally with RORA for the regulation of genes involved in liver metabolism. Induces LPCAT3-dependent phospholipid remodeling in endoplasmic reticulum (ER) membranes of hepatocytes, driving SREBF1 processing and lipogenesis. Via LPCAT3, triggers the incorporation of arachidonate into phosphatidylcholines of ER membranes, increasing membrane dynamics and enabling triacylglycerols transfer to nascent very low-density lipoprotein (VLDL) particles. Via LPCAT3 also counteracts lipid-induced ER stress response and inflammation, likely by modulating SRC kinase membrane compartmentalization and limiting the synthesis of lipid inflammatory mediators. Plays an anti-inflammatory role during the hepatic acute phase response by acting as a corepressor: inhibits the hepatic acute phase response by preventing dissociation of the N-Cor corepressor complex. The polypeptide is Oxysterols receptor LXR-beta (NR1H2) (Homo sapiens (Human)).